The following is a 338-amino-acid chain: POU domain, class 4, transcription factor 3 (338 aa).

The short motif at 56–65 is the POU-IV box element; it reads RAEALAAVDI. The POU-specific domain maps to 179 to 256; the sequence is DVESDPRELE…VLQAWLEEAE (78 aa). Residues 274–333 constitute a DNA-binding region (homeobox); that stretch reads RKRKRTSIAAPEKRSLEAYFAIQPRPSSEKIAAIAEKLDLKKNVVRVWFCNQRQKQKRMK.

This sequence belongs to the POU transcription factor family. Class-4 subfamily. Interacts with ISL1. As to expression, brain. Seems to be specific to the retina.

The protein resides in the nucleus. Its subcellular location is the cytoplasm. In terms of biological role, acts as a transcriptional activator. Acts by binding to sequences related to the consensus octamer motif 5'-ATGCAAAT-3' in the regulatory regions of its target genes. Involved in the auditory system development, required for terminal differentiation of hair cells in the inner ear. The sequence is that of POU domain, class 4, transcription factor 3 (POU4F3) from Homo sapiens (Human).